The following is a 503-amino-acid chain: Cobyric acid synthase (503 aa).

The 203-residue stretch at 245 to 447 (DISIAIIRLP…LHGIFDEISL (203 aa)) folds into the GATase cobBQ-type domain. The active-site Nucleophile is C326. The active site involves H439.

This sequence belongs to the CobB/CobQ family. CobQ subfamily.

The protein operates within cofactor biosynthesis; adenosylcobalamin biosynthesis. In terms of biological role, catalyzes amidations at positions B, D, E, and G on adenosylcobyrinic A,C-diamide. NH(2) groups are provided by glutamine, and one molecule of ATP is hydrogenolyzed for each amidation. This Alkaliphilus metalliredigens (strain QYMF) protein is Cobyric acid synthase.